Reading from the N-terminus, the 416-residue chain is Dihydrolipoyllysine-residue succinyltransferase component of 2-oxoglutarate dehydrogenase complex (416 aa).

In terms of domain architecture, Lipoyl-binding spans 3-78 (IVDVKVPQLS…VADEIIAKID (76 aa)). Lys44 bears the N6-lipoyllysine mark. In terms of domain architecture, Peripheral subunit-binding (PSBD) spans 115–152 (VAMPSAAKLMAEAGLSAGQVAGTGKDGRITKGDALAAA). Residues His387 and Asp391 contribute to the active site.

This sequence belongs to the 2-oxoacid dehydrogenase family. Forms a 24-polypeptide structural core with octahedral symmetry. Part of the 2-oxoglutarate dehydrogenase (OGDH) complex composed of E1 (2-oxoglutarate dehydrogenase), E2 (dihydrolipoamide succinyltransferase) and E3 (dihydrolipoamide dehydrogenase); the complex contains multiple copies of the three enzymatic components (E1, E2 and E3). It depends on (R)-lipoate as a cofactor.

The enzyme catalyses N(6)-[(R)-dihydrolipoyl]-L-lysyl-[protein] + succinyl-CoA = N(6)-[(R)-S(8)-succinyldihydrolipoyl]-L-lysyl-[protein] + CoA. It functions in the pathway amino-acid degradation; L-lysine degradation via saccharopine pathway; glutaryl-CoA from L-lysine: step 6/6. E2 component of the 2-oxoglutarate dehydrogenase (OGDH) complex which catalyzes the second step in the conversion of 2-oxoglutarate to succinyl-CoA and CO(2). The sequence is that of Dihydrolipoyllysine-residue succinyltransferase component of 2-oxoglutarate dehydrogenase complex (sucB) from Cupriavidus necator (strain ATCC 17699 / DSM 428 / KCTC 22496 / NCIMB 10442 / H16 / Stanier 337) (Ralstonia eutropha).